Here is a 414-residue protein sequence, read N- to C-terminus: Ribulose bisphosphate carboxylase large chain (414 aa).

Substrate contacts are provided by N102 and T152. K154 acts as the Proton acceptor in catalysis. K156 is a binding site for substrate. Residues K180, D182, and E183 each coordinate Mg(2+). N6-carboxylysine is present on K180. H273 serves as the catalytic Proton acceptor. Substrate is bound by residues R274, H306, and S358.

The protein belongs to the RuBisCO large chain family. Type I subfamily. In terms of assembly, heterohexadecamer of 8 large chains and 8 small chains; disulfide-linked. The disulfide link is formed within the large subunit homodimers. Mg(2+) serves as cofactor. The disulfide bond which can form in the large chain dimeric partners within the hexadecamer appears to be associated with oxidative stress and protein turnover.

The protein resides in the plastid. Its subcellular location is the chloroplast. The enzyme catalyses 2 (2R)-3-phosphoglycerate + 2 H(+) = D-ribulose 1,5-bisphosphate + CO2 + H2O. It carries out the reaction D-ribulose 1,5-bisphosphate + O2 = 2-phosphoglycolate + (2R)-3-phosphoglycerate + 2 H(+). RuBisCO catalyzes two reactions: the carboxylation of D-ribulose 1,5-bisphosphate, the primary event in carbon dioxide fixation, as well as the oxidative fragmentation of the pentose substrate in the photorespiration process. Both reactions occur simultaneously and in competition at the same active site. This is Ribulose bisphosphate carboxylase large chain (rbcL) from Antrophyum reticulatum (Ox-tongue fern).